We begin with the raw amino-acid sequence, 276 residues long: NH(3)-dependent NAD(+) synthetase (276 aa).

An ATP-binding site is contributed by 43-50 (GISGGVDS). Residue Asp49 coordinates Mg(2+). Position 146 (Arg146) interacts with deamido-NAD(+). Thr166 serves as a coordination point for ATP. Mg(2+) is bound at residue Glu171. Positions 179 and 186 each coordinate deamido-NAD(+). Residues Lys195 and Thr217 each coordinate ATP. Residue 266 to 267 (HK) participates in deamido-NAD(+) binding.

It belongs to the NAD synthetase family. As to quaternary structure, homodimer.

It carries out the reaction deamido-NAD(+) + NH4(+) + ATP = AMP + diphosphate + NAD(+) + H(+). The protein operates within cofactor biosynthesis; NAD(+) biosynthesis; NAD(+) from deamido-NAD(+) (ammonia route): step 1/1. Functionally, catalyzes the ATP-dependent amidation of deamido-NAD to form NAD. Uses ammonia as a nitrogen source. In Aliivibrio fischeri (strain MJ11) (Vibrio fischeri), this protein is NH(3)-dependent NAD(+) synthetase.